Reading from the N-terminus, the 297-residue chain is ER membrane protein complex subunit 2 (297 aa).

Residue Ala2 is modified to N-acetylalanine. TPR repeat units follow at residues 87-120 (HRVK…DPTN), 155-188 (QEAW…NPHN), and 192-225 (CQQY…NNRN). Lys255 bears the N6-acetyllysine mark.

It belongs to the EMC2 family. Component of the ER membrane protein complex (EMC). Interacts with WNK1 (via amphipathic alpha-helix region); promoting the ER membrane protein complex assembly by preventing EMC2 ubiquitination. In terms of processing, ubiquitinated when soluble in the cytoplasm, leading to its degradation by the proteasome. Interaction with EMC2 prevents its ubiquitination and degradation.

It localises to the endoplasmic reticulum membrane. Functionally, part of the endoplasmic reticulum membrane protein complex (EMC) that enables the energy-independent insertion into endoplasmic reticulum membranes of newly synthesized membrane proteins. Preferentially accommodates proteins with transmembrane domains that are weakly hydrophobic or contain destabilizing features such as charged and aromatic residues. Involved in the cotranslational insertion of multi-pass membrane proteins in which stop-transfer membrane-anchor sequences become ER membrane spanning helices. It is also required for the post-translational insertion of tail-anchored/TA proteins in endoplasmic reticulum membranes. By mediating the proper cotranslational insertion of N-terminal transmembrane domains in an N-exo topology, with translocated N-terminus in the lumen of the ER, controls the topology of multi-pass membrane proteins like the G protein-coupled receptors. By regulating the insertion of various proteins in membranes, it is indirectly involved in many cellular processes. The polypeptide is ER membrane protein complex subunit 2 (Pongo abelii (Sumatran orangutan)).